The chain runs to 556 residues: Cell wall integrity and stress response component 3 (556 aa).

Residues 1-38 (MERVWFAKLTNKGTIKIGYISFILLSLLCQSLIGLVNA) form the signal peptide. The 94-residue stretch at 39–132 (DFNYEGCYSA…SSYMNVYVNA (94 aa)) folds into the WSC domain. The Extracellular portion of the chain corresponds to 39–384 (DFNYEGCYSA…QRLSGGAIAG (346 aa)). Residue asparagine 84 is glycosylated (N-linked (GlcNAc...) asparagine). Low complexity-rich tracts occupy residues 142 to 169 (SSSK…SSTT) and 184 to 257 (TTVS…STTS). Disordered regions lie at residues 142–257 (SSSK…STTS) and 269–312 (TLSS…PSTS). 2 N-linked (GlcNAc...) asparagine glycosylation sites follow: asparagine 367 and asparagine 370. Residues 385 to 405 (IVIGVVFGVIFIILILLFLIW) form a helical membrane-spanning segment. Residues 406 to 556 (RRRKSHDQLD…LSSTVSHNRA (151 aa)) are Cytoplasmic-facing. Disordered regions lie at residues 425–444 (YSFG…SGTT) and 534–556 (LQVV…HNRA). Polar residues predominate over residues 546–556 (ELSSTVSHNRA).

It localises to the membrane. This chain is Cell wall integrity and stress response component 3 (WSC3), found in Saccharomyces cerevisiae (strain ATCC 204508 / S288c) (Baker's yeast).